The primary structure comprises 159 residues: 2-C-methyl-D-erythritol 2,4-cyclodiphosphate synthase (159 aa).

Residues Asp8 and His10 each contribute to the a divalent metal cation site. Residues 8–10 (DVH) and 34–35 (HS) contribute to the 4-CDP-2-C-methyl-D-erythritol 2-phosphate site. His42 contacts a divalent metal cation. 4-CDP-2-C-methyl-D-erythritol 2-phosphate contacts are provided by residues 56-58 (DIG), 61-65 (FPDTD), 132-135 (TTTE), Phe139, and Arg142.

The protein belongs to the IspF family. In terms of assembly, homotrimer. The cofactor is a divalent metal cation.

The enzyme catalyses 4-CDP-2-C-methyl-D-erythritol 2-phosphate = 2-C-methyl-D-erythritol 2,4-cyclic diphosphate + CMP. Its pathway is isoprenoid biosynthesis; isopentenyl diphosphate biosynthesis via DXP pathway; isopentenyl diphosphate from 1-deoxy-D-xylulose 5-phosphate: step 4/6. Its function is as follows. Involved in the biosynthesis of isopentenyl diphosphate (IPP) and dimethylallyl diphosphate (DMAPP), two major building blocks of isoprenoid compounds. Catalyzes the conversion of 4-diphosphocytidyl-2-C-methyl-D-erythritol 2-phosphate (CDP-ME2P) to 2-C-methyl-D-erythritol 2,4-cyclodiphosphate (ME-CPP) with a corresponding release of cytidine 5-monophosphate (CMP). This is 2-C-methyl-D-erythritol 2,4-cyclodiphosphate synthase from Syntrophobacter fumaroxidans (strain DSM 10017 / MPOB).